The chain runs to 473 residues: Ribulose bisphosphate carboxylase large chain (473 aa).

2 residues coordinate substrate: asparagine 116 and threonine 166. Lysine 168 functions as the Proton acceptor in the catalytic mechanism. Lysine 170 contributes to the substrate binding site. Lysine 194, aspartate 196, and glutamate 197 together coordinate Mg(2+). At lysine 194 the chain carries N6-carboxylysine. The active-site Proton acceptor is the histidine 287. The substrate site is built by arginine 288, histidine 320, and serine 372.

Belongs to the RuBisCO large chain family. Type I subfamily. In terms of assembly, heterohexadecamer of 8 large chains and 8 small chains. Requires Mg(2+) as cofactor.

The catalysed reaction is 2 (2R)-3-phosphoglycerate + 2 H(+) = D-ribulose 1,5-bisphosphate + CO2 + H2O. It carries out the reaction D-ribulose 1,5-bisphosphate + O2 = 2-phosphoglycolate + (2R)-3-phosphoglycerate + 2 H(+). In terms of biological role, ruBisCO catalyzes two reactions: the carboxylation of D-ribulose 1,5-bisphosphate, the primary event in carbon dioxide fixation, as well as the oxidative fragmentation of the pentose substrate. Both reactions occur simultaneously and in competition at the same active site. This is Ribulose bisphosphate carboxylase large chain from Nitrosomonas europaea (strain ATCC 19718 / CIP 103999 / KCTC 2705 / NBRC 14298).